Reading from the N-terminus, the 64-residue chain is Ferredoxin-2 (64 aa).

Positions 2–29 constitute a 4Fe-4S ferredoxin-type domain; it reads RIHVDQDKCCGAGSCVLAAPDVFDQREE. [3Fe-4S] cluster is bound by residues Cys-10, Cys-16, and Cys-55.

[3Fe-4S] cluster serves as cofactor.

Functionally, electron transport protein for the cytochrome P-450-SU2 system. The sequence is that of Ferredoxin-2 (subB) from Streptomyces griseolus.